The sequence spans 1051 residues: Probable valine--tRNA ligase, mitochondrial (1051 aa).

The N-terminal 20 residues, 1–20 (MNKLLFLSKKSSTSNLYRFY), are a transit peptide targeting the mitochondrion. Positions 71-81 (PNVTGSLHIGH) match the 'HIGH' region motif. Positions 606–610 (KMSKS) match the 'KMSKS' region motif. An ATP-binding site is contributed by lysine 609. The stretch at 972–1019 (KELQISIEFDKEINNQLNQKLINPNQSNDKKILKLENFIKQLQDEIDN) forms a coiled coil.

The protein belongs to the class-I aminoacyl-tRNA synthetase family.

It localises to the mitochondrion. It carries out the reaction tRNA(Val) + L-valine + ATP = L-valyl-tRNA(Val) + AMP + diphosphate. In Dictyostelium discoideum (Social amoeba), this protein is Probable valine--tRNA ligase, mitochondrial (valS2).